The primary structure comprises 244 residues: Nuclear protein UL4 homolog (244 aa).

The interval 193 to 227 (RPDDQTTPTPTPHQYTSQRRQPETNCPSSPQPAFF) is disordered. The span at 205–220 (HQYTSQRRQPETNCPS) shows a compositional bias: polar residues.

It belongs to the alphaherpesvirinae HHV-1 UL4 family.

It is found in the host nucleus. This Varicella-zoster virus (strain Dumas) (HHV-3) protein is Nuclear protein UL4 homolog.